We begin with the raw amino-acid sequence, 698 residues long: MRLAVGALLVCAVLGLCLAVPDKTVRWCAVSEHEATKCQSFRDHMKSVIPSDGPSVACVKKASYLDCIRAIAANEADAVTLDAGLVYDAYLAPNNLKPVVAEFYGSKEDPQTFYYAVAVVKKDSGFQMNQLRGKKSCHTGLGRSAGWNIPIGLLYCDLPEPRKPLEKAVANFFSGSCAPCADGTDFPQLCQLCPGCGCSTLNQYFGYSGAFKCLKDGAGDVAFVKHSTIFENLANKADRDQYELLCLDNTRKPVDEYKDCHLAQVPSHTVVARSMGGKEDLIWELLNQAQEHFGKDKSKEFQLFSSPHGKDLLFKDSAHGFLKVPPRMDAKMYLGYEYVTAIRNLREGTCPEAPTDECKPVKWCALSHHERLKCDEWSVNSVGKIECVSAETTEDCIAKIMNGEADAMSLDGGFVYIAGKCGLVPVLAENYNKSDNCEDTPEAGYFAIAVVKKSASDLTWDNLKGKKSCHTAVGRTAGWNIPMGLLYNKINHCRFDEFFSEGCAPGSKKDSSLCKLCMGSGLNLCEPNNKEGYYGYTGAFRCLVEKGDVAFVKHQTVPQNTGGKNPDPWAKNLNEKDYELLCLDGTRKPVEEYANCHLARAPNHAVVTRKDKEACVHKILRQQQHLFGSNVTDCSGNFCLFRSETKDLLFRDDTVCLAKLHDRNTYEKYLGEEYVKAVGNLRKCSTSSLLEACTFRRP.

An N-terminal signal peptide occupies residues 1 to 19 (MRLAVGALLVCAVLGLCLA). 2 Transferrin-like domains span residues 25 to 347 (VRWC…NLRE) and 361 to 683 (VKWC…NLRK). 2 cysteine pairs are disulfide-bonded: Cys28–Cys67 and Cys38–Cys58. Arg42 bears the Dimethylated arginine mark. O-linked (GalNAc...) serine glycosylation is present at Ser51. Fe(3+) contacts are provided by Asp82 and Tyr114. Cystine bridges form between Cys137/Cys213, Cys156/Cys350, Cys177/Cys193, Cys180/Cys198, Cys190/Cys196, Cys246/Cys260, Cys358/Cys615, Cys364/Cys396, Cys374/Cys387, Cys421/Cys693, Cys437/Cys656, Cys469/Cys542, Cys493/Cys684, Cys503/Cys517, Cys514/Cys525, Cys582/Cys596, and Cys634/Cys639. Residues Thr139, Arg143, Ala145, and Gly146 each contribute to the hydrogencarbonate site. Tyr207 provides a ligand contact to Fe(3+). Position 268 (His268) interacts with Fe(3+). Ser389 is subject to Phosphoserine; by FAM20C. Asp411 serves as a coordination point for Fe(3+). N-linked (GlcNAc...) (complex) asparagine glycosylation occurs at Asn432. A Fe(3+)-binding site is contributed by Tyr445. The hydrogencarbonate site is built by Thr471, Arg475, Ala477, and Gly478. A glycan (N-linked (GlcNAc...) asparagine; atypical; partial) is linked at Asn491. A Fe(3+)-binding site is contributed by Tyr536. His604 contacts Fe(3+). Asn630 carries an N-linked (GlcNAc...) (complex) asparagine glycan. Ser685 carries the post-translational modification Phosphoserine; by FAM20C.

It belongs to the transferrin family. As to quaternary structure, monomer. Part of a complex composed of SLC40A1/ferroportin, TF/transferrin and HEPH/hephaestin that transfers iron from cells to transferrin. In terms of assembly, (Microbial infection) Binds to Neisseria transferrin-binding protein A (tbpA or tbp1). Forms a large complex with TbpA and TbpB. (Microbial infection) Binds to Neisseria transferrin-binding protein B (tbpb or tbp2). As to expression, expressed by the liver and secreted in plasma.

It is found in the secreted. In terms of biological role, transferrins are iron binding transport proteins which can bind two Fe(3+) ions in association with the binding of an anion, usually bicarbonate. It is responsible for the transport of iron from sites of absorption and heme degradation to those of storage and utilization. Serum transferrin may also have a further role in stimulating cell proliferation. Its function is as follows. (Microbial infection) Serves as an iron source for Neisseria species, which capture the protein and extract its iron for their own use. Functionally, (Microbial infection) Serves as an iron source for parasite T.brucei (strain 427), which capture TF via its own transferrin receptor ESAG6:ESAG7 and extract its iron for its own use. In Homo sapiens (Human), this protein is Serotransferrin.